Consider the following 212-residue polypeptide: Large ribosomal subunit protein uL4 (212 aa).

Polar residues predominate over residues Ser-54–Asn-65. The disordered stretch occupies residues Ser-54–Pro-85.

The protein belongs to the universal ribosomal protein uL4 family. As to quaternary structure, part of the 50S ribosomal subunit.

Functionally, one of the primary rRNA binding proteins, this protein initially binds near the 5'-end of the 23S rRNA. It is important during the early stages of 50S assembly. It makes multiple contacts with different domains of the 23S rRNA in the assembled 50S subunit and ribosome. Its function is as follows. Forms part of the polypeptide exit tunnel. This is Large ribosomal subunit protein uL4 from Blochmanniella floridana.